Consider the following 391-residue polypeptide: Homoserine O-acetyltransferase (391 aa).

The region spanning 50–360 (NAILICHALT…DKGHDAFLLD (311 aa)) is the AB hydrolase-1 domain. Residue S155 is the Nucleophile of the active site. R225 serves as a coordination point for substrate. Catalysis depends on residues D321 and H354. D355 contributes to the substrate binding site.

The protein belongs to the AB hydrolase superfamily. MetX family. In terms of assembly, homodimer.

It is found in the cytoplasm. The catalysed reaction is L-homoserine + acetyl-CoA = O-acetyl-L-homoserine + CoA. The protein operates within amino-acid biosynthesis; L-methionine biosynthesis via de novo pathway; O-acetyl-L-homoserine from L-homoserine: step 1/1. Functionally, transfers an acetyl group from acetyl-CoA to L-homoserine, forming acetyl-L-homoserine. The chain is Homoserine O-acetyltransferase from Rhodospirillum rubrum (strain ATCC 11170 / ATH 1.1.1 / DSM 467 / LMG 4362 / NCIMB 8255 / S1).